A 522-amino-acid chain; its full sequence is Target of rapamycin complex 2 subunit MAPKAP1 (522 aa).

An N-acetylalanine modification is found at A2. Residues 2-184 (AFLDNPTIIL…KKIDVYLPLH (183 aa)) form an interaction with MAP3K2 region. An interaction with NBN region spans residues 2 to 267 (AFLDNPTIIL…GFSTLALVEK (266 aa)). The interval 38–59 (LEKTHPPSVPGDSGSEVQGSSG) is disordered. T86 carries the post-translational modification Phosphothreonine; by PKB/AKT1 and RPS6KB1. The residue at position 128 (S128) is a Phosphoserine; by PKC. Residues 139 to 267 (QSILSVRLEQ…GFSTLALVEK (129 aa)) enclose the CRIM domain. 3 positions are modified to phosphoserine: S186, S315, and S356. The interval 279–353 (LFVRINAAHG…QNAWEFCLVR (75 aa)) is SIN1-type RBD. In terms of domain architecture, SIN1-type PH spans 382–487 (HYKSFKVSMI…IVLKVNYILE (106 aa)). An a 1,2-diacyl-sn-glycero-3-phospho-(1D-myo-inositol-3,4,5-trisphosphate)-binding site is contributed by R393. Position 398 is a phosphothreonine; by RPS6KB1 (T398). Positions 428 and 464 each coordinate a 1,2-diacyl-sn-glycero-3-phospho-(1D-myo-inositol-3,4,5-trisphosphate). The tract at residues 468–522 (FESDAATVSEIVLKVNYILESRASTARADYLAQKQRKLNRRTSFSFQKEKKSGQQ) is interaction with ATF2. Residue S510 is modified to Phosphoserine.

The protein belongs to the SIN1 family. As to quaternary structure, component of the mechanistic target of rapamycin complex 2 (mTORC2), consisting in two heterotretramers composed of MTOR, MLST8, RICTOR and MAPKAP1/SIN1. The mTORC2 core complex associates with PRR5/PROTOR1 and/or PRR5L/PROTOR2. Contrary to mTORC1, mTORC2 does not bind to and is not sensitive to FKBP12-rapamycin. Interacts with MAP3K2. Interacts with ATF2. Interacts with MAPK8. Interacts with GTP-bound HRAS and KRAS; inhibiting their activity. Interacts with IFNAR2. Post-translationally, phosphorylation at Ser-128 by PKC promotes relocalization to the perinuclear region, where the mTORC2 complex specifically mediates phosphorylation of SGK1. Phosphorylated at Thr-86 by AKT1 or RPS6KB1 in the presence of growth factors; the effect of this phosphorylation is however unclear. According to two studies, phosphorylation at Thr-86 by AKT1 is part of a positive feedback loop that increases mTORC2 activation. According to another study, phosphorylation at Thr-86 and Thr-398 by RPS6KB1 promotes dissociation from the mTORC2 complex, leading to inhibit mTORC2 signaling. In terms of tissue distribution, uniquitously expressed, with highest levels in testis, kidney and liver. Present in renal tubule cells (at protein level).

It localises to the cell membrane. Its subcellular location is the endoplasmic reticulum membrane. The protein resides in the early endosome membrane. It is found in the late endosome membrane. The protein localises to the lysosome membrane. It localises to the golgi apparatus membrane. Its subcellular location is the mitochondrion outer membrane. The protein resides in the cytoplasm. It is found in the perinuclear region. The protein localises to the nucleus. Its activity is regulated as follows. Phosphatidylinositol 3,4,5-trisphosphate (PI(3,4,5)P3) promotes MTOR activation by relieving MAPKAP1/SIN1-mediated inhibition of MTOR that takes place in absence of PI(3,4,5)P3. In terms of biological role, component of the mechanistic target of rapamycin complex 2 (mTORC2), which transduces signals from growth factors to pathways involved in proliferation, cytoskeletal organization, lipogenesis and anabolic output. In response to growth factors, mTORC2 phosphorylates and activates AGC protein kinase family members, including AKT (AKT1, AKT2 and AKT3), PKC (PRKCA, PRKCB and PRKCE) and SGK1. In contrast to mTORC1, mTORC2 is nutrient-insensitive. Within the mTORC2 complex, MAPKAP1/SIN1 acts as a substrate adapter which recognizes and binds AGC protein kinase family members for phosphorylation by MTOR. mTORC2 plays a critical role in AKT1 activation by mediating phosphorylation of different sites depending on the context, such as 'Thr-450', 'Ser-473', 'Ser-477' or 'Thr-479', facilitating the phosphorylation of the activation loop of AKT1 on 'Thr-308' by PDPK1/PDK1 which is a prerequisite for full activation. mTORC2 catalyzes the phosphorylation of SGK1 at 'Ser-422' and of PRKCA on 'Ser-657'. The mTORC2 complex also phosphorylates various proteins involved in insulin signaling, such as FBXW8 and IGF2BP1. mTORC2 acts upstream of Rho GTPases to regulate the actin cytoskeleton, probably by activating one or more Rho-type guanine nucleotide exchange factors. mTORC2 promotes the serum-induced formation of stress-fibers or F-actin. MAPKAP1 inhibits MAP3K2 by preventing its dimerization and autophosphorylation. Inhibits HRAS and KRAS independently of mTORC2 complex. Enhances osmotic stress-induced phosphorylation of ATF2 and ATF2-mediated transcription. Involved in ciliogenesis, regulates cilia length through its interaction with CCDC28B independently of mTORC2 complex. This chain is Target of rapamycin complex 2 subunit MAPKAP1, found in Mus musculus (Mouse).